Here is a 233-residue protein sequence, read N- to C-terminus: Probable GTP-binding protein EngB (233 aa).

Positions 21–228 constitute an EngB-type G domain; it reads GLPEVALVGR…WRWIREHVQD (208 aa). Residues 29-36 and 56-60 contribute to the GTP site; these read GRSNVGKS and GRTQA. Mg(2+) is bound by residues S36 and T58. Positions 68 to 87 are disordered; that stretch reads PQGKPRPEGEPQPDKDAGRT. Residues 72 to 85 are compositionally biased toward basic and acidic residues; that stretch reads PRPEGEPQPDKDAG. Residues 107 to 110, 174 to 177, and 207 to 209 each bind GTP; these read DMPG, TKAD, and FSA.

It belongs to the TRAFAC class TrmE-Era-EngA-EngB-Septin-like GTPase superfamily. EngB GTPase family. Mg(2+) is required as a cofactor.

Its function is as follows. Necessary for normal cell division and for the maintenance of normal septation. In Symbiobacterium thermophilum (strain DSM 24528 / JCM 14929 / IAM 14863 / T), this protein is Probable GTP-binding protein EngB.